A 472-amino-acid polypeptide reads, in one-letter code: Trigger factor (472 aa).

Residues 172 to 257 (GDEVRFDFKG…IKEITSVKPQ (86 aa)) enclose the PPIase FKBP-type domain. 2 stretches are compositionally biased toward polar residues: residues 439 to 449 (NQPKDTASTLS) and 461 to 472 (KTSNTKKVASKK). Positions 439 to 472 (NQPKDTASTLSKQEDKPKVAKAKTSNTKKVASKK) are disordered.

This sequence belongs to the FKBP-type PPIase family. Tig subfamily.

Its subcellular location is the cytoplasm. It catalyses the reaction [protein]-peptidylproline (omega=180) = [protein]-peptidylproline (omega=0). Functionally, involved in protein export. Acts as a chaperone by maintaining the newly synthesized protein in an open conformation. Functions as a peptidyl-prolyl cis-trans isomerase. The polypeptide is Trigger factor (Ureaplasma urealyticum serovar 10 (strain ATCC 33699 / Western)).